The following is a 459-amino-acid chain: Argininosuccinate lyase (459 aa).

It belongs to the lyase 1 family. Argininosuccinate lyase subfamily.

It is found in the cytoplasm. The enzyme catalyses 2-(N(omega)-L-arginino)succinate = fumarate + L-arginine. It functions in the pathway amino-acid biosynthesis; L-arginine biosynthesis; L-arginine from L-ornithine and carbamoyl phosphate: step 3/3. The sequence is that of Argininosuccinate lyase from Prochlorococcus marinus (strain AS9601).